The chain runs to 2209 residues: Genome polyprotein (2209 aa).

Residue Gly2 is the site of N-myristoyl glycine; by host attachment. The Cytoplasmic portion of the chain corresponds to 2 to 1520 (GAQVSSQKVG…NINRAMTILQ (1519 aa)). The amphipathic alpha-helix stretch occupies residues 580-600 (GLGQMLESMIDNTVRETVGAA). Residues His901 and Asp919 each act as for protease 2A activity in the active site. Zn(2+) is bound by residues Cys936 and Cys938. Cys990 serves as the catalytic For protease 2A activity. 2 residues coordinate Zn(2+): Cys996 and His998. Positions 1128 to 1200 (GDSWLKKFTE…HQSCPSQEHQ (73 aa)) are membrane-binding. The interval 1128 to 1266 (GDSWLKKFTE…SPGTGKSVAT (139 aa)) is oligomerization. Residues 1149 to 1153 (SNKIS) form an RNA-binding region. The SF3 helicase domain maps to 1232–1388 (EHTINNYIQF…NEYSRDGKLN (157 aa)). 1256-1263 (GSPGTGKS) is a binding site for ATP. Residues Cys1396, Cys1399, Cys1408, and Cys1413 each contribute to the Zn(2+) site. The segment at 1396–1413 (CKNCHQPANFKRCCPLVC) adopts a C4-type zinc-finger fold. Positions 1440–1447 (ERNRRSNI) are RNA-binding. An oligomerization region spans residues 1451–1456 (MEALFQ). Residues 1521 to 1536 (AVTTFAAVAGVVYVMY) lie within the membrane without spanning it. The Cytoplasmic portion of the chain corresponds to 1537–2209 (KLFAGHQGAY…TLYRRWLDSF (673 aa)). Tyr1546 is modified (O-(5'-phospho-RNA)-tyrosine). One can recognise a Peptidase C3 domain in the interval 1566–1744 (GPGFDYAVAM…FAAALKRSYF (179 aa)). Residues His1605, Glu1636, and Cys1712 each act as for protease 3C activity in the active site. Positions 1975-2090 (EKLFAFDYTG…SYPHEVDASL (116 aa)) constitute a RdRp catalytic domain. Positions 1981 and 2076 each coordinate Mg(2+).

This sequence belongs to the picornaviruses polyprotein family. In terms of assembly, interacts with capsid protein VP1 and capsid protein VP3 to form heterotrimeric protomers. As to quaternary structure, interacts with capsid protein VP0, and capsid protein VP3 to form heterotrimeric protomers. Interacts with human PVR. Five protomers subsequently associate to form pentamers which serve as building blocks for the capsid. Interacts with capsid protein VP2, capsid protein VP3 and capsid protein VP4 following cleavage of capsid protein VP0. Interacts with capsid protein VP1 and capsid protein VP3 in the mature capsid. In terms of assembly, interacts with capsid protein VP0 and capsid protein VP1 to form heterotrimeric protomers. Five protomers subsequently associate to form pentamers which serve as building blocks for the capsid. Interacts with capsid protein VP4 in the mature capsid. Interacts with protein 2C; this interaction may be important for virion morphogenesis. As to quaternary structure, interacts with capsid protein VP1 and capsid protein VP3. Homodimer. In terms of assembly, homohexamer; forms a hexameric ring structure with 6-fold symmetry characteristic of AAA+ ATPases. Interacts (via N-terminus) with host RTN3 (via reticulon domain); this interaction is important for viral replication. Interacts with capsid protein VP3; this interaction may be important for virion morphogenesis. As to quaternary structure, interacts with protein 3CD. Homodimer. Interacts with host GBF1. Interacts (via GOLD domain) with host ACBD3 (via GOLD domain); this interaction allows the formation of a viral protein 3A/ACBD3 heterotetramer with a 2:2 stoichiometry, which will stimulate the recruitment of host PI4KB in order to synthesize PI4P at the viral RNA replication sites. In terms of assembly, interacts with RNA-directed RNA polymerase. As to quaternary structure, interacts with protein 3AB and with RNA-directed RNA polymerase. Interacts with Viral protein genome-linked and with protein 3CD. The cofactor is Mg(2+). Specific enzymatic cleavages in vivo by the viral proteases yield processing intermediates and the mature proteins. Post-translationally, myristoylation is required for the formation of pentamers during virus assembly. Further assembly of 12 pentamers and a molecule of genomic RNA generates the provirion. In terms of processing, during virion maturation, immature virions are rendered infectious following cleavage of VP0 into VP4 and VP2. This maturation seems to be an autocatalytic event triggered by the presence of RNA in the capsid and it is followed by a conformational change infectious virion. Myristoylation is required during RNA encapsidation and formation of the mature virus particle. Post-translationally, VPg is uridylylated by the polymerase into VPg-pUpU. This acts as a nucleotide-peptide primer for the genomic RNA replication.

The protein resides in the virion. It is found in the host cytoplasm. Its subcellular location is the host cytoplasmic vesicle membrane. It localises to the host nucleus. The enzyme catalyses a ribonucleoside 5'-triphosphate + H2O = a ribonucleoside 5'-diphosphate + phosphate + H(+). It catalyses the reaction Selective cleavage of Tyr-|-Gly bond in the picornavirus polyprotein.. The catalysed reaction is RNA(n) + a ribonucleoside 5'-triphosphate = RNA(n+1) + diphosphate. It carries out the reaction Selective cleavage of Gln-|-Gly bond in the poliovirus polyprotein. In other picornavirus reactions Glu may be substituted for Gln, and Ser or Thr for Gly.. Replication or transcription is subject to high level of random mutations by the nucleotide analog ribavirin. Functionally, forms an icosahedral capsid of pseudo T=3 symmetry with capsid proteins VP2 and VP3. The capsid is 300 Angstroms in diameter, composed of 60 copies of each capsid protein and enclosing the viral positive strand RNA genome. Capsid protein VP1 mainly forms the vertices of the capsid. Capsid protein VP1 interacts with host cell receptor PVR to provide virion attachment to target host cells. This attachment induces virion internalization predominantly through clathrin- and caveolin-independent endocytosis in Hela cells and through caveolin-mediated endocytosis in brain microvascular endothelial cells. Tyrosine kinases are probably involved in the entry process. Virus binding to PVR induces increased junctional permeability and rearrangement of junctional proteins. Modulation of endothelial tight junctions, as well as cytolytic infection of endothelial cells themselves, may result in loss of endothelial integrity which may help the virus to reach the CNS. After binding to its receptor, the capsid undergoes conformational changes. Capsid protein VP1 N-terminus (that contains an amphipathic alpha-helix) and capsid protein VP4 are externalized. Together, they shape a pore in the host membrane through which viral genome is translocated to host cell cytoplasm. Its function is as follows. Forms an icosahedral capsid of pseudo T=3 symmetry with capsid proteins VP2 and VP3. The capsid is 300 Angstroms in diameter, composed of 60 copies of each capsid protein and enclosing the viral positive strand RNA genome. In terms of biological role, lies on the inner surface of the capsid shell. After binding to the host receptor, the capsid undergoes conformational changes. Capsid protein VP4 is released, Capsid protein VP1 N-terminus is externalized, and together, they shape a pore in the host membrane through which the viral genome is translocated into the host cell cytoplasm. Component of immature procapsids, which is cleaved into capsid proteins VP4 and VP2 after maturation. Allows the capsid to remain inactive before the maturation step. Functionally, cysteine protease that cleaves viral polyprotein and specific host proteins. It is responsible for the autocatalytic cleavage between the P1 and P2 regions, which is the first cleavage occurring in the polyprotein. Also cleaves the host translation initiation factor EIF4G1, in order to shut down the capped cellular mRNA translation. Inhibits the host nucleus-cytoplasm protein and RNA trafficking by cleaving host members of the nuclear pores including NUP98, NUP62 and NUP153. Counteracts stress granule formation probably by antagonizing its assembly or promoting its dissassembly. Cleaves and inhibits host IFIH1/MDA5, thereby inhibiting the type-I IFN production and the establishment of the antiviral state. Cleaves and inhibits host MAVS, thereby inhibiting the type-I IFN production and the establishment of the antiviral state. Its function is as follows. Plays an essential role in the virus replication cycle by acting as a viroporin. Creates a pore in the host endoplasmic reticulum and as a consequence releases Ca2+ in the cytoplasm of infected cell. In turn, high levels of cytoplasmic calcium may trigger membrane trafficking and transport of viral ER-associated proteins to viroplasms, sites of viral genome replication. In terms of biological role, induces and associates with structural rearrangements of intracellular membranes. Displays RNA-binding, nucleotide binding and NTPase activities. May play a role in virion morphogenesis and viral RNA encapsidation by interacting with the capsid protein VP3. Localizes the viral replication complex to the surface of membranous vesicles. Together with protein 3CD binds the Cis-Active RNA Element (CRE) which is involved in RNA synthesis initiation. Acts as a cofactor to stimulate the activity of 3D polymerase, maybe through a nucleid acid chaperone activity. Functionally, localizes the viral replication complex to the surface of membranous vesicles. It inhibits host cell endoplasmic reticulum-to-Golgi apparatus transport and causes the disassembly of the Golgi complex, possibly through GBF1 interaction. This would result in depletion of MHC, trail receptors and IFN receptors at the host cell surface. Plays an essential role in viral RNA replication by recruiting ACBD3 and PI4KB at the viral replication sites, thereby allowing the formation of the rearranged membranous structures where viral replication takes place. Its function is as follows. Acts as a primer for viral RNA replication and remains covalently bound to viral genomic RNA. VPg is uridylylated prior to priming replication into VPg-pUpU. The oriI viral genomic sequence may act as a template for this. The VPg-pUpU is then used as primer on the genomic RNA poly(A) by the RNA-dependent RNA polymerase to replicate the viral genome. During genome replication, the VPg-RNA linkage is removed by the host TDP2, thereby accelerating replication. During the late stage of the replication cycle, host TDP2 is excluded from sites of viral RNA synthesis and encapsidation, allowing for the generation of progeny virions. In terms of biological role, involved in the viral replication complex and viral polypeptide maturation. It exhibits protease activity with a specificity and catalytic efficiency that is different from protease 3C. Protein 3CD lacks polymerase activity. Protein 3CD binds to the 5'UTR of the viral genome. Major viral protease that mediates proteolytic processing of the polyprotein. Cleaves host EIF5B, contributing to host translation shutoff. Also cleaves host PABPC1, contributing to host translation shutoff. Cleaves host RIGI and thus contributes to the inhibition of type I interferon production. Cleaves host NLRP1, triggers host N-glycine-mediated degradation of the autoinhibitory NLRP1 N-terminal fragment. Inhibits the integrated stress response (ISR) in the infected cell by cleaving host G3BP1. Stress granule formation is thus inhibited, which allows protein synthesis and viral replication. Functionally, replicates the viral genomic RNA on the surface of intracellular membranes. May form linear arrays of subunits that propagate along a strong head-to-tail interaction called interface-I. Covalently attaches UMP to a tyrosine of VPg, which is used to prime RNA synthesis. The positive stranded RNA genome is first replicated at virus induced membranous vesicles, creating a dsRNA genomic replication form. This dsRNA is then used as template to synthesize positive stranded RNA genomes. ss(+)RNA genomes are either translated, replicated or encapsidated. The sequence is that of Genome polyprotein from Homo sapiens (Human).